The primary structure comprises 301 residues: Cardiolipin synthase (CMP-forming) (301 aa).

A disordered region spans residues Ser70 to Gln93. The span at Gly71–Gln93 shows a compositional bias: low complexity. Helical transmembrane passes span Ile109–Ile129, Phe133–Ile153, Ile190–Val212, Leu250–Leu270, and Ile272–Gly292.

Belongs to the CDP-alcohol phosphatidyltransferase class-I family. Requires a divalent metal cation as cofactor. In terms of tissue distribution, highly expressed in tissues such as heart, skeletal muscle and liver.

It localises to the mitochondrion inner membrane. The enzyme catalyses a CDP-1,2-diacyl-sn-glycerol + a 1,2-diacyl-sn-glycero-3-phospho-(1'-sn-glycerol) = a cardiolipin + CMP + H(+). Functionally, catalyzes the synthesis of cardiolipin (CL) (diphosphatidylglycerol) by specifically transferring a phosphatidyl group from CDP-diacylglycerol to phosphatidylglycerol (PG). CL is a key phospholipid in mitochondrial membranes and plays important roles in maintaining the functional integrity and dynamics of mitochondria under both optimal and stress conditions. The polypeptide is Cardiolipin synthase (CMP-forming) (CRLS1) (Homo sapiens (Human)).